The chain runs to 287 residues: ATP synthase gamma chain (287 aa).

It belongs to the ATPase gamma chain family. In terms of assembly, F-type ATPases have 2 components, CF(1) - the catalytic core - and CF(0) - the membrane proton channel. CF(1) has five subunits: alpha(3), beta(3), gamma(1), delta(1), epsilon(1). CF(0) has three main subunits: a, b and c.

It is found in the cell inner membrane. Functionally, produces ATP from ADP in the presence of a proton gradient across the membrane. The gamma chain is believed to be important in regulating ATPase activity and the flow of protons through the CF(0) complex. This is ATP synthase gamma chain from Xylella fastidiosa (strain M12).